The primary structure comprises 130 residues: Phosphomevalonate dehydratase small subunit (130 aa).

Serine 62 serves as the catalytic Proton acceptor.

This sequence belongs to the AcnX type II small subunit family. As to quaternary structure, heterodimer composed of a large subunit (PMDh-L) and a small subunit (PMDh-S).

The catalysed reaction is (R)-5-phosphomevalonate = (2E)-3-methyl-5-phosphooxypent-2-enoate + H2O. It functions in the pathway isoprenoid biosynthesis; isopentenyl diphosphate biosynthesis via mevalonate pathway. Functionally, component of a hydro-lyase that catalyzes the dehydration of mevalonate 5-phosphate (MVA5P) to form trans-anhydromevalonate 5-phosphate (tAHMP). Involved in the archaeal mevalonate (MVA) pathway, which provides fundamental precursors for isoprenoid biosynthesis, such as isopentenyl diphosphate (IPP) and dimethylallyl diphosphate (DMAPP). This chain is Phosphomevalonate dehydratase small subunit, found in Pyrococcus abyssi (strain GE5 / Orsay).